Consider the following 615-residue polypeptide: Protein PSK SIMULATOR 2 (615 aa).

Glycine 2 is lipidated: N-myristoyl glycine. Residues 16 to 27 (KKLRSNDDDKSR) are compositionally biased toward basic and acidic residues. Disordered regions lie at residues 16 to 59 (KKLR…KSSK) and 506 to 529 (AHGV…SNTQ). Over residues 42–52 (SDSYYSDNYGG) the composition is skewed to low complexity. The span at 512–529 (QETNHVSPPNNRTISNTQ) shows a compositional bias: polar residues.

The protein localises to the nucleus. Its function is as follows. Promotes seedling growth probably via the regulation of phytosulfokine (PSK) signaling; PSK are peptide phytohormones acting as growth factors. Involved in PSK-induced root growth. Together with PSI1 and PSI3, required during vegetative growth and reproduction. This Arabidopsis thaliana (Mouse-ear cress) protein is Protein PSK SIMULATOR 2.